We begin with the raw amino-acid sequence, 499 residues long: Putative lipase atg15 (499 aa).

At 1–9 (MSIGEVSDS) the chain is on the cytoplasmic side. The chain crosses the membrane as a helical; Signal-anchor for type II membrane protein span at residues 10-30 (AGHLASLVLPIEVAPIAPLIP). Over 31 to 499 (EPPATAEHIF…PDSPERNEEM (469 aa)) the chain is Lumenal. Asn170, Asn191, Asn192, Asn250, and Asn274 each carry an N-linked (GlcNAc...) asparagine glycan. The Charge relay system role is filled by Ser290. N-linked (GlcNAc...) asparagine glycosylation occurs at Asn436. The segment at 436–499 (NGTETTTTSS…PDSPERNEEM (64 aa)) is disordered. A compositionally biased stretch (low complexity) spans 438–454 (TETTTTSSAPTTTSISR).

This sequence belongs to the AB hydrolase superfamily. Lipase family. Binds to both phosphatidylinositol (PI) and phosphatidylinositol 3,5-bisphosphate (PIP2).

It localises to the endosome. The protein localises to the multivesicular body membrane. The protein resides in the prevacuolar compartment membrane. The catalysed reaction is a triacylglycerol + H2O = a diacylglycerol + a fatty acid + H(+). Its function is as follows. Lipase which is essential for lysis of subvacuolar cytoplasm to vacuole targeted bodies and intravacuolar autophagic bodies. Involved in the lysis of intravacuolar multivesicular body (MVB) vesicles. The intravacuolar membrane disintegration by atg15 is critical to life span extension. The chain is Putative lipase atg15 (atg15) from Chaetomium globosum (strain ATCC 6205 / CBS 148.51 / DSM 1962 / NBRC 6347 / NRRL 1970) (Soil fungus).